The chain runs to 953 residues: Vacuolar membrane protease (953 aa).

Residues 1-16 (MDQTKPPRRNPLAFTP) lie on the Cytoplasmic side of the membrane. The chain crosses the membrane as a helical span at residues 17–37 (WPVTLITAVVYLAFVIPLLVI). Residues 38 to 382 (HHVVPSAPTS…TFVLFRLHTL (345 aa)) lie on the Vacuolar side of the membrane. N-linked (GlcNAc...) asparagine glycosylation is found at N53 and N115. Residues H165 and D177 each coordinate Zn(2+). E211 (proton acceptor) is an active-site residue. Zn(2+)-binding residues include E212, E237, and H310. A helical transmembrane segment spans residues 383 to 403 (FALSVTLLVVAPIVLLLTSII). Residues 404-437 (LTKVDKMYLFRTSIRPEGSLEVLPLYGDRGVIRY) are Cytoplasmic-facing. The helical transmembrane segment at 438 to 458 (PFLLGIPTAVTIGLAYLLTKF) threads the bilayer. Over 459 to 464 (NPYIVH) the chain is Vacuolar. Residues 465–485 (SSQYAVWSMMVSVWIFLAWFV) form a helical membrane-spanning segment. The Cytoplasmic portion of the chain corresponds to 486–499 (SRVADFARPSAFHR). Residues 500–520 (VYTLTWTFVVMWVLQVIATVY) form a helical membrane-spanning segment. The Vacuolar segment spans residues 521–524 (QDRW). A helical membrane pass occupies residues 525 to 545 (ALGGSYFIFFAYAGTFLATWI). The Cytoplasmic portion of the chain corresponds to 546–650 (SYLELFALPR…SLPKWLWLLQ (105 aa)). The disordered stretch occupies residues 570 to 599 (ASSHSSRRGLSEEDEEDEDEAPTESTSLLG). Acidic residues predominate over residues 581–591 (EEDEEDEDEAP). Residues 651–671 (FLLAAPIVLILVGPIALLLTG) traverse the membrane as a helical segment. The Vacuolar segment spans residues 672–684 (SLHQTGQDGSSSL). A helical transmembrane segment spans residues 685 to 705 (FIYIAIVALTTLLLSPMLPFV). Residues 706-711 (HRCTYH) are Cytoplasmic-facing. A helical membrane pass occupies residues 712–732 (IPLFMLAVFAGTLIYNLVAFP). At 733-953 (FSDSNRLKLF…VEGRKSFEIA (221 aa)) the chain is on the vacuolar side. N779 carries an N-linked (GlcNAc...) asparagine glycan.

Belongs to the peptidase M28 family. The cofactor is Zn(2+).

It localises to the vacuole membrane. Functionally, may be involved in vacuolar sorting and osmoregulation. This is Vacuolar membrane protease from Emericella nidulans (strain FGSC A4 / ATCC 38163 / CBS 112.46 / NRRL 194 / M139) (Aspergillus nidulans).